A 91-amino-acid polypeptide reads, in one-letter code: Long neurotoxin OH-37 (91 aa).

Positions 1–21 (MKTLLLTLVVMTIVCLDLGYS) are cleaved as a signal peptide. 5 cysteine pairs are disulfide-bonded: C24-C41, C34-C62, C47-C51, C66-C77, and C78-C83.

The protein belongs to the three-finger toxin family. Long-chain subfamily. Type II alpha-neurotoxin sub-subfamily. As to expression, expressed by the venom gland.

The protein resides in the secreted. Functionally, binds with high affinity to muscular (alpha-1/CHRNA1) and neuronal (alpha-7/CHRNA7) nicotinic acetylcholine receptor (nAChR) and inhibits acetylcholine from binding to the receptor, thereby impairing neuromuscular and neuronal transmission. This Ophiophagus hannah (King cobra) protein is Long neurotoxin OH-37.